Here is a 318-residue protein sequence, read N- to C-terminus: Ornithine carbamoyltransferase (318 aa).

Residues 63-66 (STRT), Q90, R114, and 141-144 (HPCQ) each bind carbamoyl phosphate. L-ornithine-binding positions include N172, D235, and 239–240 (SM). Residues 275–276 (CL) and R303 contribute to the carbamoyl phosphate site.

The protein belongs to the aspartate/ornithine carbamoyltransferase superfamily. OTCase family.

The protein resides in the cytoplasm. The catalysed reaction is carbamoyl phosphate + L-ornithine = L-citrulline + phosphate + H(+). It functions in the pathway amino-acid biosynthesis; L-arginine biosynthesis; L-arginine from L-ornithine and carbamoyl phosphate: step 1/3. Its function is as follows. Reversibly catalyzes the transfer of the carbamoyl group from carbamoyl phosphate (CP) to the N(epsilon) atom of ornithine (ORN) to produce L-citrulline. The chain is Ornithine carbamoyltransferase from Prochlorococcus marinus (strain SARG / CCMP1375 / SS120).